Reading from the N-terminus, the 575-residue chain is Beta-amylase 1, chloroplastic (575 aa).

The N-terminal 41 residues, 1-41, are a transit peptide targeting the chloroplast; that stretch reads MALNLSHQLGVLAGTPIKSGEMTDSSLLSISPPSARMMTPK. A phosphoserine mark is found at serine 55 and serine 59. A disulfide bond links cysteine 73 and cysteine 511. Aspartate 147, histidine 187, and aspartate 195 together coordinate substrate. The active-site Proton donor is the glutamate 279. 3 residues coordinate substrate: lysine 392, histidine 397, and threonine 439. Glutamate 477 acts as the Proton acceptor in catalysis. Substrate is bound by residues 478–479 and arginine 517; that span reads NA.

It belongs to the glycosyl hydrolase 14 family. As to expression, expressed in leaves, roots, flowers, pollen, and seeds.

The protein resides in the plastid. Its subcellular location is the chloroplast. The enzyme catalyses Hydrolysis of (1-&gt;4)-alpha-D-glucosidic linkages in polysaccharides so as to remove successive maltose units from the non-reducing ends of the chains.. Its activity is regulated as follows. Redox regulation; active in reducing conditions, inactive in oxidizing conditions. Thioredoxins f1, m1, and y1 mediate the reversible reductive activation of oxidized BAM1. Its function is as follows. Beta-amylase activity. Can use p-nitrophenyl maltopentaoside (PNPG5) as substrate only in reduced form. Can play a minor role in the starch degradation and maltose metabolism in chloroplasts during the night. More active on phosphorylated glucan. Interacts directly with starch or other alpha-1,4-glucan. The polypeptide is Beta-amylase 1, chloroplastic (BAM1) (Arabidopsis thaliana (Mouse-ear cress)).